Reading from the N-terminus, the 133-residue chain is ATP synthase epsilon chain, chloroplastic (133 aa).

Belongs to the ATPase epsilon chain family. F-type ATPases have 2 components, CF(1) - the catalytic core - and CF(0) - the membrane proton channel. CF(1) has five subunits: alpha(3), beta(3), gamma(1), delta(1), epsilon(1). CF(0) has three main subunits: a, b and c.

Its subcellular location is the plastid. It is found in the chloroplast thylakoid membrane. In terms of biological role, produces ATP from ADP in the presence of a proton gradient across the membrane. This Phaeodactylum tricornutum (strain CCAP 1055/1) protein is ATP synthase epsilon chain, chloroplastic.